The primary structure comprises 185 residues: Ribosome-recycling factor (185 aa).

It belongs to the RRF family.

It is found in the cytoplasm. Functionally, responsible for the release of ribosomes from messenger RNA at the termination of protein biosynthesis. May increase the efficiency of translation by recycling ribosomes from one round of translation to another. The chain is Ribosome-recycling factor from Pseudomonas fluorescens (strain SBW25).